Here is a 512-residue protein sequence, read N- to C-terminus: Maturase K (512 aa).

The protein belongs to the intron maturase 2 family. MatK subfamily.

It is found in the plastid. Its subcellular location is the chloroplast. Functionally, usually encoded in the trnK tRNA gene intron. Probably assists in splicing its own and other chloroplast group II introns. The chain is Maturase K from Amorphophallus paeoniifolius (Whitespot giant arum).